Here is a 628-residue protein sequence, read N- to C-terminus: uncharacterized protein (628 aa).

The protein belongs to the IucA/IucC family.

This is an uncharacterized protein from Sinorhizobium fredii (strain NBRC 101917 / NGR234).